Reading from the N-terminus, the 500-residue chain is MADGNTRFTVDEALVAMGFGKFQIYVLAYAGMGWVAEAMEMMLLSFVGPAVQSLWNLSARQESLITSVVFAGMLIGAYSWGIVSDKHGRRKGFIITAVVTFVAGFLSAFSPNYMWLIILRCLVGLGLGGGPVLASWYLEFIPAPSRGTWMVVFSAFWTVGTIFEASLAWLVMPRLGWRWLLAFSSVPSSLLLLFYRWTSESPRYLILQGRKAEALAILEKIARMNKTQLPPGVLSSELETELEENKNIPTENTHLLKAGESGEAVAVSKIVLKADKEPGFSLLALLSPTLMKRTLLLWVVFFGNAFAYYGVVLLTTELNNSHNRCYPTEKQLRNSNDVNYRDVFIASFAEFPGLLISAAMVDRLGRKASMASMLFTCCIFLLPLLSHQSPFITTVLLFGGRICISAAFTVVYIYAPEIYPTAVRTTGVGVGSSVGRIGGILCPLVAVGLVHGCHQTIAVLLFEVVILVSGICVCLFPFETSGRDLTDSISASKEPPSASV.

The Cytoplasmic segment spans residues 1-23; sequence MADGNTRFTVDEALVAMGFGKFQ. The helical transmembrane segment at 24-44 threads the bilayer; the sequence is IYVLAYAGMGWVAEAMEMMLL. The Extracellular portion of the chain corresponds to 45 to 62; that stretch reads SFVGPAVQSLWNLSARQE. N-linked (GlcNAc...) asparagine glycosylation occurs at Asn-56. A helical membrane pass occupies residues 63–83; it reads SLITSVVFAGMLIGAYSWGIV. The Cytoplasmic portion of the chain corresponds to 84–97; sequence SDKHGRRKGFIITA. Residues 98–118 traverse the membrane as a helical segment; the sequence is VVTFVAGFLSAFSPNYMWLII. The Extracellular portion of the chain corresponds to 119–120; that stretch reads LR. The helical transmembrane segment at 121 to 141 threads the bilayer; sequence CLVGLGLGGGPVLASWYLEFI. An ATP-binding site is contributed by 137 to 144; sequence YLEFIPAP. Residues 142-150 lie on the Cytoplasmic side of the membrane; that stretch reads PAPSRGTWM. Residues 151 to 171 form a helical membrane-spanning segment; the sequence is VVFSAFWTVGTIFEASLAWLV. At 172 to 174 the chain is on the extracellular side; that stretch reads MPR. The helical transmembrane segment at 175 to 195 threads the bilayer; the sequence is LGWRWLLAFSSVPSSLLLLFY. Topologically, residues 196-293 are cytoplasmic; that stretch reads RWTSESPRYL…ALLSPTLMKR (98 aa). Residues 294–314 traverse the membrane as a helical segment; that stretch reads TLLLWVVFFGNAFAYYGVVLL. Over 315–341 the chain is Extracellular; sequence TTELNNSHNRCYPTEKQLRNSNDVNYR. Asn-319 carries N-linked (GlcNAc...) asparagine glycosylation. The helical transmembrane segment at 342 to 362 threads the bilayer; that stretch reads DVFIASFAEFPGLLISAAMVD. Over 363–367 the chain is Cytoplasmic; it reads RLGRK. Residues 368-387 traverse the membrane as a helical segment; that stretch reads ASMASMLFTCCIFLLPLLSH. Over 388-401 the chain is Extracellular; the sequence is QSPFITTVLLFGGR. The chain crosses the membrane as a helical span at residues 402–422; it reads ICISAAFTVVYIYAPEIYPTA. At 423–429 the chain is on the cytoplasmic side; it reads VRTTGVG. The helical transmembrane segment at 430–450 threads the bilayer; that stretch reads VGSSVGRIGGILCPLVAVGLV. Residues 451-456 lie on the Extracellular side of the membrane; the sequence is HGCHQT. Residues 457–477 traverse the membrane as a helical segment; sequence IAVLLFEVVILVSGICVCLFP. Residues 478–500 lie on the Cytoplasmic side of the membrane; it reads FETSGRDLTDSISASKEPPSASV.

The protein belongs to the major facilitator (TC 2.A.1) superfamily. Organic cation transporter (TC 2.A.1.19) family. Expressed in pollen.

The protein localises to the membrane. Its function is as follows. High affinity carnitine transporter involved in the active cellular uptake of carnitine. Also transports organic cations. In Arabidopsis thaliana (Mouse-ear cress), this protein is Organic cation/carnitine transporter 7 (OCT7).